The sequence spans 394 residues: Lipid-A-disaccharide synthase (394 aa).

Belongs to the LpxB family.

The enzyme catalyses 2-N,3-O-bis[(3R)-3-hydroxytetradecanoyl]-alpha-D-glucosaminyl 1-phosphate + UDP-2-N,3-O-bis[(3R)-3-hydroxytetradecanoyl]-alpha-D-glucosamine = lipid A disaccharide (E. coli) + UDP + H(+). It catalyses the reaction a lipid X + a UDP-2-N,3-O-bis[(3R)-3-hydroxyacyl]-alpha-D-glucosamine = a lipid A disaccharide + UDP + H(+). It functions in the pathway glycolipid biosynthesis; lipid IV(A) biosynthesis; lipid IV(A) from (3R)-3-hydroxytetradecanoyl-[acyl-carrier-protein] and UDP-N-acetyl-alpha-D-glucosamine: step 5/6. Condensation of UDP-2,3-diacylglucosamine and 2,3-diacylglucosamine-1-phosphate to form lipid A disaccharide, a precursor of lipid A, a phosphorylated glycolipid that anchors the lipopolysaccharide to the outer membrane of the cell. This Yersinia pestis protein is Lipid-A-disaccharide synthase.